Reading from the N-terminus, the 32-residue chain is MSDINATRLPVWIGYSPCVGDDAVALLNRGEG.

Residues 1-10 (MSDINATRLP) constitute a propeptide that is removed on maturation. A cross-link (cyclopeptide (Val-Pro)) is located at residues 11 to 17 (VWIGYSP). Positions 18 to 32 (CVGDDAVALLNRGEG) are excised as a propeptide.

It belongs to the MSDIN fungal toxin family. Processed by the macrocyclase-peptidase enzyme POPB to yield a toxic cyclic heptapeptide. POPB first removes 10 residues from the N-terminus. Conformational trapping of the remaining peptide forces the enzyme to release this intermediate rather than proceed to macrocyclization. The enzyme rebinds the remaining peptide in a different conformation and catalyzes macrocyclization of the N-terminal 7 residues.

Probable toxin that belongs to the MSDIN-like toxin family responsible for a large number of food poisoning cases and deaths. In Amanita fuligineoides, this protein is MSDIN-like toxin proprotein 3.